We begin with the raw amino-acid sequence, 456 residues long: Ribosome assembly protein METTL17, mitochondrial (456 aa).

A mitochondrion-targeting transit peptide spans 1–19 (MAAALKCLLTLGRWCPGLG). Cys333, Cys339, Cys347, and Cys404 together coordinate [4Fe-4S] cluster.

This sequence belongs to the methyltransferase superfamily. Rsm22 family. Associates with the mitochondrial ribosome (mitoribosome).

It localises to the mitochondrion matrix. In terms of biological role, mitochondrial ribosome (mitoribosome) assembly factor. Binds at the interface of the head and body domains of the mitochondrial small ribosomal subunit (mt-SSU), occluding the mRNA channel and preventing compaction of the head domain towards the body. Probable inactive methyltransferase: retains the characteristic folding and ability to bind S-adenosyl-L-methionine, but it probably lost its methyltransferase activity. This Homo sapiens (Human) protein is Ribosome assembly protein METTL17, mitochondrial.